We begin with the raw amino-acid sequence, 408 residues long: E3 ubiquitin-protein ligase IE2 (408 aa).

A compositionally biased stretch (polar residues) spans 1–10; it reads MSRQINAATP. 2 disordered regions span residues 1–67 and 176–199; these read MSRQ…ENVQ and QSPDLFASPQSPQPQQQQQQQSEP. Residues 13 to 25 show a composition bias toward basic residues; sequence SRRHRLSLSRRRI. A compositionally biased stretch (low complexity) spans 30–47; sequence SPEAQPSSSSRSQPSSSS. Repeat copies occupy residues 34 to 41, 42 to 49, 51 to 54, and 55 to 58. The segment at 34 to 49 is 2 X 8 AA tandem repeats of Q-P-S-S-S-S-R-S; the sequence is QPSSSSRSQPSSSSRS. Positions 51 to 58 are 2 X 4 AA tandem repeats of R-R-Q-E; it reads RRQERRQE. A compositionally biased stretch (low complexity) spans 183-197; it reads SPQSPQPQQQQQQQS. An RING-type zinc finger spans residues 207 to 255; that stretch reads CNICFTTFKDTKNVNSSFVTSIHCNHAVCFKCYVKIIMDNSVYKCFCSA.

It belongs to the alphabaculovirus IE2 protein family. In terms of assembly, homooligomer. Auto-ubiquitinated.

Its subcellular location is the host nucleus. It carries out the reaction S-ubiquitinyl-[E2 ubiquitin-conjugating enzyme]-L-cysteine + [acceptor protein]-L-lysine = [E2 ubiquitin-conjugating enzyme]-L-cysteine + N(6)-ubiquitinyl-[acceptor protein]-L-lysine.. RING-finger E3 ubiquitin ligase that plays an important regulatory role during the initial stages of infection. Migrates to specific nuclear foci early in infection supposely to prepare the sites for viral transcription and replication by targeting and ubiquitinating host proteins. Acts as a transcriptional activator and activates a number of viral promoters including itself, IE1 and the promoter of 39K gene. The protein is E3 ubiquitin-protein ligase IE2 (IE2) of Lepidoptera (butterflies and moths).